A 280-amino-acid chain; its full sequence is Putative pyruvate, phosphate dikinase regulatory protein (280 aa).

Residue 152 to 159 (GVSRTSKS) coordinates ADP.

This sequence belongs to the pyruvate, phosphate/water dikinase regulatory protein family. PDRP subfamily.

The enzyme catalyses N(tele)-phospho-L-histidyl/L-threonyl-[pyruvate, phosphate dikinase] + ADP = N(tele)-phospho-L-histidyl/O-phospho-L-threonyl-[pyruvate, phosphate dikinase] + AMP + H(+). It catalyses the reaction N(tele)-phospho-L-histidyl/O-phospho-L-threonyl-[pyruvate, phosphate dikinase] + phosphate + H(+) = N(tele)-phospho-L-histidyl/L-threonyl-[pyruvate, phosphate dikinase] + diphosphate. Functionally, bifunctional serine/threonine kinase and phosphorylase involved in the regulation of the pyruvate, phosphate dikinase (PPDK) by catalyzing its phosphorylation/dephosphorylation. This chain is Putative pyruvate, phosphate dikinase regulatory protein, found in Anaplasma phagocytophilum (strain HZ).